A 177-amino-acid chain; its full sequence is Protein VERNALIZATION 3 (177 aa).

It belongs to the phosphatidylethanolamine-binding protein family. In terms of tissue distribution, expressed in leaves but not in shoot apex.

Functionally, involved in the regulation of vernalization and of flowering time; this process in essential for flowering in cv. Bd29-1 but seems do not occur in cv. Bd21. This Brachypodium distachyon (Purple false brome) protein is Protein VERNALIZATION 3.